The chain runs to 833 residues: Leucine--tRNA ligase (833 aa).

Positions Pro-41 to His-52 match the 'HIGH' region motif. Positions Lys-610–Ser-614 match the 'KMSKS' region motif. Residue Lys-613 coordinates ATP.

The protein belongs to the class-I aminoacyl-tRNA synthetase family.

The protein resides in the cytoplasm. The catalysed reaction is tRNA(Leu) + L-leucine + ATP = L-leucyl-tRNA(Leu) + AMP + diphosphate. This chain is Leucine--tRNA ligase, found in Streptococcus pneumoniae (strain CGSP14).